A 445-amino-acid polypeptide reads, in one-letter code: Phosphoglucosamine mutase (445 aa).

Serine 102 functions as the Phosphoserine intermediate in the catalytic mechanism. The Mg(2+) site is built by serine 102, aspartate 241, aspartate 243, and aspartate 245. The residue at position 102 (serine 102) is a Phosphoserine.

The protein belongs to the phosphohexose mutase family. The cofactor is Mg(2+). Post-translationally, activated by phosphorylation.

The enzyme catalyses alpha-D-glucosamine 1-phosphate = D-glucosamine 6-phosphate. Its function is as follows. Catalyzes the conversion of glucosamine-6-phosphate to glucosamine-1-phosphate. This Serratia proteamaculans (strain 568) protein is Phosphoglucosamine mutase.